Consider the following 718-residue polypeptide: Cyclomaltodextrin glucanotransferase (718 aa).

Residues 1 to 34 (MFQMAKRAFLSTTLTLGLLAGSALPFLPASAVYA) form the signal peptide. The interval 35 to 172 (DPDTAVTNKQ…GIKIVIDFAP (138 aa)) is A1. Residues Asp61, Asn63, Asn66, and Asn67 each contribute to the Ca(2+) site. An intrachain disulfide couples Cys77 to Cys84. Residues Gly85 and Asp87 each coordinate Ca(2+). A substrate-binding site is contributed by 134–135 (YW). Asn173 lines the Ca(2+) pocket. The tract at residues 173-236 (NHTSPAMETD…NLYDLADFNH (64 aa)) is b. His174 serves as a coordination point for substrate. Residue Ile224 coordinates Ca(2+). Substrate is bound by residues 227–230 (NLYD) and Asp230. Residue Asp233 coordinates Ca(2+). An A2 region spans residues 237 to 440 (NNATIDKYFK…LRKSNPAIAY (204 aa)). Arg261 serves as a coordination point for substrate. Asp263 acts as the Nucleophile in catalysis. Substrate is bound by residues 266 to 267 (KH) and His267. A Ca(2+)-binding site is contributed by His267. The active-site Proton donor is the Glu291. Residues His361, Asp405, and Arg409 each contribute to the substrate site. Positions 441–528 (GSTQQRWINN…ATAVWQYTTA (88 aa)) are c. Residues 529–614 (ETTPTIGHVG…SNAYNNFTIL (86 aa)) are d. The IPT/TIG domain occupies 532–612 (PTIGHVGPVM…VNSNAYNNFT (81 aa)). Residues 613–718 (ILTGDQVTVR…GTATVTVNWQ (106 aa)) enclose the CBM20 domain. Residues 615 to 718 (TGDQVTVRFV…GTATVTVNWQ (104 aa)) are e.

It belongs to the glycosyl hydrolase 13 family. In terms of assembly, monomer. Requires Ca(2+) as cofactor.

It is found in the secreted. It catalyses the reaction Cyclizes part of a (1-&gt;4)-alpha-D-glucan chain by formation of a (1-&gt;4)-alpha-D-glucosidic bond.. This chain is Cyclomaltodextrin glucanotransferase, found in Niallia circulans (Bacillus circulans).